A 533-amino-acid polypeptide reads, in one-letter code: Bifunctional purine biosynthesis protein PurH (533 aa).

The 148-residue stretch at 1–148 (MDTPRPIKRA…KNHKDVTIVV (148 aa)) folds into the MGS-like domain.

It belongs to the PurH family.

The catalysed reaction is (6R)-10-formyltetrahydrofolate + 5-amino-1-(5-phospho-beta-D-ribosyl)imidazole-4-carboxamide = 5-formamido-1-(5-phospho-D-ribosyl)imidazole-4-carboxamide + (6S)-5,6,7,8-tetrahydrofolate. The enzyme catalyses IMP + H2O = 5-formamido-1-(5-phospho-D-ribosyl)imidazole-4-carboxamide. The protein operates within purine metabolism; IMP biosynthesis via de novo pathway; 5-formamido-1-(5-phospho-D-ribosyl)imidazole-4-carboxamide from 5-amino-1-(5-phospho-D-ribosyl)imidazole-4-carboxamide (10-formyl THF route): step 1/1. It participates in purine metabolism; IMP biosynthesis via de novo pathway; IMP from 5-formamido-1-(5-phospho-D-ribosyl)imidazole-4-carboxamide: step 1/1. The protein is Bifunctional purine biosynthesis protein PurH of Colwellia psychrerythraea (strain 34H / ATCC BAA-681) (Vibrio psychroerythus).